We begin with the raw amino-acid sequence, 258 residues long: Type III pantothenate kinase 1 (258 aa).

6 to 13 (DMGNSHIH) is a binding site for ATP. Substrate is bound at residue 107 to 110 (GADR). The active-site Proton acceptor is the aspartate 109. Aspartate 130 lines the K(+) pocket. Threonine 133 is a binding site for ATP. Residue threonine 185 coordinates substrate.

This sequence belongs to the type III pantothenate kinase family. As to quaternary structure, homodimer. It depends on NH4(+) as a cofactor. K(+) serves as cofactor.

It localises to the cytoplasm. It carries out the reaction (R)-pantothenate + ATP = (R)-4'-phosphopantothenate + ADP + H(+). Its pathway is cofactor biosynthesis; coenzyme A biosynthesis; CoA from (R)-pantothenate: step 1/5. In terms of biological role, catalyzes the phosphorylation of pantothenate (Pan), the first step in CoA biosynthesis. In Francisella tularensis subsp. tularensis (strain FSC 198), this protein is Type III pantothenate kinase 1.